Reading from the N-terminus, the 88-residue chain is Beta-defensin 115 (88 aa).

The signal sequence occupies residues methionine 1 to alanine 27. Intrachain disulfides connect cysteine 38/cysteine 65, cysteine 45/cysteine 59, and cysteine 49/cysteine 66.

Belongs to the beta-defensin family.

The protein localises to the secreted. Its function is as follows. Has antibacterial activity. This Homo sapiens (Human) protein is Beta-defensin 115 (DEFB115).